The sequence spans 195 residues: HTH-type transcriptional regulator BetI (195 aa).

Residues 8–68 (EIRRAQLIDA…ATMRHVLRDL (61 aa)) form the HTH tetR-type domain. Positions 31-50 (TLASVAQRASISTGIVSHYF) form a DNA-binding region, H-T-H motif.

It participates in amine and polyamine biosynthesis; betaine biosynthesis via choline pathway [regulation]. Its function is as follows. Repressor involved in the biosynthesis of the osmoprotectant glycine betaine. It represses transcription of the choline transporter BetT and the genes of BetAB involved in the synthesis of glycine betaine. The sequence is that of HTH-type transcriptional regulator BetI from Paraburkholderia phytofirmans (strain DSM 17436 / LMG 22146 / PsJN) (Burkholderia phytofirmans).